A 317-amino-acid polypeptide reads, in one-letter code: tRNA-cytidine(32) 2-sulfurtransferase (317 aa).

A PP-loop motif motif is present at residues 63 to 68 (SGGKDS). Positions 138, 141, and 229 each coordinate [4Fe-4S] cluster.

Belongs to the TtcA family. In terms of assembly, homodimer. Mg(2+) serves as cofactor. The cofactor is [4Fe-4S] cluster.

The protein localises to the cytoplasm. It catalyses the reaction cytidine(32) in tRNA + S-sulfanyl-L-cysteinyl-[cysteine desulfurase] + AH2 + ATP = 2-thiocytidine(32) in tRNA + L-cysteinyl-[cysteine desulfurase] + A + AMP + diphosphate + H(+). It participates in tRNA modification. In terms of biological role, catalyzes the ATP-dependent 2-thiolation of cytidine in position 32 of tRNA, to form 2-thiocytidine (s(2)C32). The sulfur atoms are provided by the cysteine/cysteine desulfurase (IscS) system. The polypeptide is tRNA-cytidine(32) 2-sulfurtransferase (Janthinobacterium sp. (strain Marseille) (Minibacterium massiliensis)).